The chain runs to 103 residues: Large ribosomal subunit protein uL22c (103 aa).

It belongs to the universal ribosomal protein uL22 family. In terms of assembly, part of the 50S ribosomal subunit.

The protein localises to the plastid. It localises to the chloroplast. Its function is as follows. This protein binds specifically to 23S rRNA. In terms of biological role, the globular domain of the protein is located near the polypeptide exit tunnel on the outside of the subunit, while an extended beta-hairpin is found that lines the wall of the exit tunnel in the center of the 70S ribosome. The protein is Large ribosomal subunit protein uL22c (rpl22) of Cyanidium caldarium (Red alga).